Reading from the N-terminus, the 151-residue chain is 3-hydroxyacyl-[acyl-carrier-protein] dehydratase FabZ (151 aa).

The active site involves His-54.

This sequence belongs to the thioester dehydratase family. FabZ subfamily.

The protein resides in the cytoplasm. The catalysed reaction is a (3R)-hydroxyacyl-[ACP] = a (2E)-enoyl-[ACP] + H2O. Functionally, involved in unsaturated fatty acids biosynthesis. Catalyzes the dehydration of short chain beta-hydroxyacyl-ACPs and long chain saturated and unsaturated beta-hydroxyacyl-ACPs. The protein is 3-hydroxyacyl-[acyl-carrier-protein] dehydratase FabZ of Idiomarina loihiensis (strain ATCC BAA-735 / DSM 15497 / L2-TR).